Here is a 292-residue protein sequence, read N- to C-terminus: Mycothiol acetyltransferase (292 aa).

N-acetyltransferase domains follow at residues 2–138 (AEVV…PSAP) and 141–292 (VTVR…YAHS). Glu33 lines the 1D-myo-inositol 2-(L-cysteinylamino)-2-deoxy-alpha-D-glucopyranoside pocket. Acetyl-CoA is bound at residue 68 to 70 (AVV). The 1D-myo-inositol 2-(L-cysteinylamino)-2-deoxy-alpha-D-glucopyranoside site is built by Glu168, Lys215, and Glu225. Residues 229-231 (VAV) and 236-242 (QGRGLGR) contribute to the acetyl-CoA site. Tyr263 lines the 1D-myo-inositol 2-(L-cysteinylamino)-2-deoxy-alpha-D-glucopyranoside pocket. Residue 268–273 (NAAALH) coordinates acetyl-CoA.

This sequence belongs to the acetyltransferase family. MshD subfamily. As to quaternary structure, monomer.

The enzyme catalyses 1D-myo-inositol 2-(L-cysteinylamino)-2-deoxy-alpha-D-glucopyranoside + acetyl-CoA = mycothiol + CoA + H(+). Functionally, catalyzes the transfer of acetyl from acetyl-CoA to desacetylmycothiol (Cys-GlcN-Ins) to form mycothiol. In Tsukamurella paurometabola (strain ATCC 8368 / DSM 20162 / CCUG 35730 / CIP 100753 / JCM 10117 / KCTC 9821 / NBRC 16120 / NCIMB 702349 / NCTC 13040) (Corynebacterium paurometabolum), this protein is Mycothiol acetyltransferase.